Here is a 380-residue protein sequence, read N- to C-terminus: Peptide chain release factor 1-like, mitochondrial (380 aa).

Residues 1–26 constitute a mitochondrion transit peptide; that stretch reads MRSRVLWGAARWLWPRRAVGPARRPL. Positions 63–117 form a coiled coil; that stretch reads ELLAVIKLLNEKERELRETEHLLHDENEDLRKLAENEITLCQKEITQLKHQIILL. The tract at residues 236–300 is GGQ domain; that stretch reads PKDLRIDTKR…LRAKLYSMHL (65 aa). A GGQ motif is present at residues 250–252; it reads GGQ. Position 252 is an N5-methylglutamine (glutamine 252).

Belongs to the prokaryotic/mitochondrial release factor family. In terms of processing, methylation of glutamine in the GGQ triplet by HEMK1 is conserved from bacteria to mammals. As to expression, expressed in skeletal muscle (at protein level).

It is found in the mitochondrion. Functionally, mitochondrial peptide chain release factor that directs the termination of translation in response to the peptide chain termination codons UAA and UAG. The protein is Peptide chain release factor 1-like, mitochondrial of Homo sapiens (Human).